Here is a 142-residue protein sequence, read N- to C-terminus: Nucleoside diphosphate kinase (142 aa).

Residues Lys-11, Phe-59, Arg-87, Thr-93, Arg-104, and Asn-114 each coordinate ATP. His-117 serves as the catalytic Pros-phosphohistidine intermediate.

The protein belongs to the NDK family. In terms of assembly, homotetramer. It depends on Mg(2+) as a cofactor.

The protein resides in the cytoplasm. The catalysed reaction is a 2'-deoxyribonucleoside 5'-diphosphate + ATP = a 2'-deoxyribonucleoside 5'-triphosphate + ADP. The enzyme catalyses a ribonucleoside 5'-diphosphate + ATP = a ribonucleoside 5'-triphosphate + ADP. Its function is as follows. Major role in the synthesis of nucleoside triphosphates other than ATP. The ATP gamma phosphate is transferred to the NDP beta phosphate via a ping-pong mechanism, using a phosphorylated active-site intermediate. The sequence is that of Nucleoside diphosphate kinase from Hahella chejuensis (strain KCTC 2396).